The primary structure comprises 84 residues: CLAVATA3/ESR (CLE)-related protein 13 (84 aa).

The N-terminal stretch at 1–29 (MGRYTTDQVQVYVLVIVLCTFFSTLQARS) is a signal peptide. The segment at 57–84 (KQVRDISGDRLSPAGPDPQHNGRSPPRK) is disordered. Residues P69 and P72 each carry the hydroxyproline modification. O-linked (Ara...) hydroxyproline glycosylation occurs at P72.

It belongs to the CLV3/ESR signal peptide family. In terms of processing, the O-glycosylation (arabinosylation) of the hydroxyproline Pro-72 enhances binding affinity of the CLE13p peptide for its receptor. In terms of tissue distribution, expressed in young nodules throughout the central tissue. Expressed in the apical region of elongated nodules, corresponding to the meristematic and early infection zones.

The protein localises to the secreted. It is found in the extracellular space. Signaling peptide involved in the regulation of nodulation. Moves from root to shoot to function with the receptor kinase SUNN, in a signaling pathway that plays roles during cellular differentiation, both at the onset of nodulation, and later during nodule meristem development and subsequent homeostasis. Interacts with SUNN signaling to control nodule numbers. SUNN is involved in the autoregulation of nodulation (AON), a long distance systemic signaling from root to shoot and back again, which allows legumes to limit the number of root nodules formed based on available nitrogen and previous rhizobial colonization. This chain is CLAVATA3/ESR (CLE)-related protein 13, found in Medicago truncatula (Barrel medic).